The chain runs to 278 residues: NADPH-dependent 7-cyano-7-deazaguanine reductase (278 aa).

87–89 (IES) serves as a coordination point for substrate. Residue 89–90 (SK) coordinates NADPH. Catalysis depends on C185, which acts as the Thioimide intermediate. The Proton donor role is filled by D192. 224 to 225 (HE) contacts substrate. 253–254 (RG) contacts NADPH. The interval 255-278 (GLDINPYRSTNPTFSVQNHRSFRQ) is disordered. The segment covering 261 to 278 (YRSTNPTFSVQNHRSFRQ) has biased composition (polar residues).

The protein belongs to the GTP cyclohydrolase I family. QueF type 2 subfamily. In terms of assembly, homodimer.

Its subcellular location is the cytoplasm. The catalysed reaction is 7-aminomethyl-7-carbaguanine + 2 NADP(+) = 7-cyano-7-deazaguanine + 2 NADPH + 3 H(+). It participates in tRNA modification; tRNA-queuosine biosynthesis. Functionally, catalyzes the NADPH-dependent reduction of 7-cyano-7-deazaguanine (preQ0) to 7-aminomethyl-7-deazaguanine (preQ1). This Coxiella burnetii (strain Dugway 5J108-111) protein is NADPH-dependent 7-cyano-7-deazaguanine reductase.